A 144-amino-acid chain; its full sequence is Large ribosomal subunit protein uL15 (144 aa).

A compositionally biased stretch (basic and acidic residues) spans 1 to 13 (MKLNELKPAEGSR). The tract at residues 1-47 (MKLNELKPAEGSRKVRNRVGRGDSSGNGKTAGRGQKGQKARSKTRLG) is disordered. The span at 23–35 (DSSGNGKTAGRGQ) shows a compositional bias: gly residues.

This sequence belongs to the universal ribosomal protein uL15 family. As to quaternary structure, part of the 50S ribosomal subunit.

In terms of biological role, binds to the 23S rRNA. The protein is Large ribosomal subunit protein uL15 of Levilactobacillus brevis (strain ATCC 367 / BCRC 12310 / CIP 105137 / JCM 1170 / LMG 11437 / NCIMB 947 / NCTC 947) (Lactobacillus brevis).